A 267-amino-acid polypeptide reads, in one-letter code: Cytochrome b (267 aa).

A run of 4 helical transmembrane segments spans residues 4-24, 48-69, 84-104, and 149-169; these read FGSL…LLAA, WLIR…YLHI, WNTG…GYVL, and FFTL…IHLT. Heme b-binding residues include His-54 and His-68. The heme b site is built by His-153 and His-167. Residue His-172 participates in a ubiquinone binding. The next 2 helical transmembrane spans lie at 197-217 and 259-267; these read LKDI…ALFA and LGGVLALAA.

The protein belongs to the cytochrome b family. In terms of assembly, the cytochrome bc1 complex contains 11 subunits: 3 respiratory subunits (MT-CYB, CYC1 and UQCRFS1), 2 core proteins (UQCRC1 and UQCRC2) and 6 low-molecular weight proteins (UQCRH/QCR6, UQCRB/QCR7, UQCRQ/QCR8, UQCR10/QCR9, UQCR11/QCR10 and a cleavage product of UQCRFS1). This cytochrome bc1 complex then forms a dimer. It depends on heme b as a cofactor.

The protein resides in the mitochondrion inner membrane. In terms of biological role, component of the ubiquinol-cytochrome c reductase complex (complex III or cytochrome b-c1 complex) that is part of the mitochondrial respiratory chain. The b-c1 complex mediates electron transfer from ubiquinol to cytochrome c. Contributes to the generation of a proton gradient across the mitochondrial membrane that is then used for ATP synthesis. This Raphus cucullatus (Dodo) protein is Cytochrome b (MT-CYB).